Here is a 1188-residue protein sequence, read N- to C-terminus: Probable phosphoenolpyruvate synthase (1188 aa).

Positions 536-670 (LGGAVLSDGH…LIVGLYRLGI (135 aa)) constitute a DOD-type homing endonuclease domain. H824 acts as the Tele-phosphohistidine intermediate in catalysis. Residues R917, R964, E1061, G1083, T1084, N1085, and D1086 each contribute to the substrate site. Residue E1061 coordinates Mg(2+). D1086 lines the Mg(2+) pocket. C1133 (proton donor) is an active-site residue.

This sequence belongs to the PEP-utilizing enzyme family. It depends on Mg(2+) as a cofactor. Post-translationally, this protein undergoes a protein self splicing that involves a post-translational excision of the intervening region (intein) followed by peptide ligation.

The enzyme catalyses pyruvate + ATP + H2O = phosphoenolpyruvate + AMP + phosphate + 2 H(+). Its pathway is carbohydrate biosynthesis; gluconeogenesis. In terms of biological role, catalyzes the phosphorylation of pyruvate to phosphoenolpyruvate. This chain is Probable phosphoenolpyruvate synthase (ppsA), found in Methanocaldococcus jannaschii (strain ATCC 43067 / DSM 2661 / JAL-1 / JCM 10045 / NBRC 100440) (Methanococcus jannaschii).